A 233-amino-acid chain; its full sequence is Large ribosomal subunit protein uL1 (233 aa).

This sequence belongs to the universal ribosomal protein uL1 family. As to quaternary structure, part of the 50S ribosomal subunit.

Its function is as follows. Binds directly to 23S rRNA. The L1 stalk is quite mobile in the ribosome, and is involved in E site tRNA release. Protein L1 is also a translational repressor protein, it controls the translation of the L11 operon by binding to its mRNA. The polypeptide is Large ribosomal subunit protein uL1 (Psychrobacter cryohalolentis (strain ATCC BAA-1226 / DSM 17306 / VKM B-2378 / K5)).